The following is a 198-amino-acid chain: FMN-dependent NADH:quinone oxidoreductase (198 aa).

FMN-binding positions include S10, 16 to 18 (SQS), 94 to 97 (MYNF), and 138 to 141 (TRGG).

The protein belongs to the azoreductase type 1 family. In terms of assembly, homodimer. FMN is required as a cofactor.

It catalyses the reaction 2 a quinone + NADH + H(+) = 2 a 1,4-benzosemiquinone + NAD(+). It carries out the reaction N,N-dimethyl-1,4-phenylenediamine + anthranilate + 2 NAD(+) = 2-(4-dimethylaminophenyl)diazenylbenzoate + 2 NADH + 2 H(+). Quinone reductase that provides resistance to thiol-specific stress caused by electrophilic quinones. In terms of biological role, also exhibits azoreductase activity. Catalyzes the reductive cleavage of the azo bond in aromatic azo compounds to the corresponding amines. The polypeptide is FMN-dependent NADH:quinone oxidoreductase (Shewanella sp. (strain ANA-3)).